Consider the following 424-residue polypeptide: GDP-fucose protein O-fucosyltransferase 2 (424 aa).

The signal sequence occupies residues 1–20 (MHFFPIQLLVLFFAEKIAFA). 51–55 (GEGFN) is a GDP-beta-L-fucose binding site. Catalysis depends on E52, which acts as the Proton acceptor. Cysteines 154 and 187 form a disulfide. N205 carries an N-linked (GlcNAc...) asparagine glycan. GDP-beta-L-fucose is bound by residues 288 to 290 (HWR), D366, and 383 to 384 (TF). C407 and C414 are joined by a disulfide.

Belongs to the glycosyltransferase 68 family. As to expression, expressed in the anterior part of embryos, in the hypodermal and neuronal cells of the head. Expressed at different levels in a variety of cell types after hatching, including neuronal, hypodermal, muscle, intestinal, and somatic gonadal cells. Expressed in the nerve ring around the pharynx, in dorsal and ventral nerve cords, intestine, and a variety of hypodermal cells of L1-L3 larvae. Expressed in gonadal sheath cells, spermatheca, and tissues surrounding the vulva of adult hermaphrodites, and in the body wall muscle and hypodermal cells of adults of both sexes.

The protein resides in the endoplasmic reticulum. It is found in the golgi apparatus. The catalysed reaction is L-seryl-[protein] + GDP-beta-L-fucose = 3-O-(alpha-L-fucosyl)-L-seryl-[protein] + GDP + H(+). The enzyme catalyses L-threonyl-[protein] + GDP-beta-L-fucose = 3-O-(alpha-L-fucosyl)-L-threonyl-[protein] + GDP + H(+). Its pathway is protein modification; protein glycosylation. Functionally, catalyzes the reaction that attaches fucose through an O-glycosidic linkage to a conserved serine or threonine residue in the consensus sequence C1-X-X-S/T-C2 of thrombospondin type I repeats (TSRs) where C1 and C2 are the first and second cysteines of the repeat, respectively. O-fucosylates members of several protein families including the ADAMTS superfamily and the thrombospondin (TSP) and spondin families. The sequence is that of GDP-fucose protein O-fucosyltransferase 2 (pad-2) from Caenorhabditis elegans.